A 222-amino-acid polypeptide reads, in one-letter code: Kinetochore protein Spc25 (222 aa).

Residues 51 to 100 (RHQRKVGKLQKVIMERREELDKRVSFIEELDRELEATKLRSLAMKDRIKQ) adopt a coiled-coil conformation.

It belongs to the SPC25 family. In terms of assembly, component of the Ndc80 complex, which is composed of Ndc80, Nuf2 and Spc25.

The protein localises to the nucleus. The protein resides in the chromosome. Its subcellular location is the centromere. It is found in the kinetochore. In terms of biological role, acts as a component of the essential kinetochore-associated Ndc80 complex, which is required for chromosome segregation and spindle checkpoint activity during meiosis and mitosis. Required for kinetochore integrity and the organization of stable microtubule binding sites in the outer plate of the kinetochore. Participates in SAC signaling that responds specifically to disruptions in spindle microtubule dynamics. The NDC80 complex synergistically enhances the affinity of the SKA1 complex for microtubules and may allow the NDC80 complex to track depolymerizing microtubules. This chain is Kinetochore protein Spc25, found in Drosophila sechellia (Fruit fly).